A 220-amino-acid chain; its full sequence is Ribose-5-phosphate isomerase A (220 aa).

Substrate is bound by residues 25–28 (TGST), 80–83 (DGAD), and 93–96 (KGGG). Catalysis depends on Glu-102, which acts as the Proton acceptor. A substrate-binding site is contributed by Lys-120.

The protein belongs to the ribose 5-phosphate isomerase family. In terms of assembly, homodimer.

It catalyses the reaction aldehydo-D-ribose 5-phosphate = D-ribulose 5-phosphate. Its pathway is carbohydrate degradation; pentose phosphate pathway; D-ribose 5-phosphate from D-ribulose 5-phosphate (non-oxidative stage): step 1/1. In terms of biological role, catalyzes the reversible conversion of ribose-5-phosphate to ribulose 5-phosphate. In Bacillus thuringiensis subsp. konkukian (strain 97-27), this protein is Ribose-5-phosphate isomerase A.